Here is a 517-residue protein sequence, read N- to C-terminus: PSTB2-interacting protein 1 (517 aa).

As to quaternary structure, interacts with PDR17/PSTB2 and SCS2.

In terms of biological role, phosphatidic acid-binding protein involved in interorganelle phosphatidylserine (PtdSer) transport. Linkks a PtdSer donor membrane (via binding of SCS2 and phosphatidic acid present in the donor membrane) with an acceptor membrane (via its interaction with PDR17), forming a zone of apposition that facilitates PtdSer transfer. The chain is PSTB2-interacting protein 1 from Saccharomyces cerevisiae (strain ATCC 204508 / S288c) (Baker's yeast).